The chain runs to 436 residues: Methylenetetrahydrofolate--tRNA-(uracil-5-)-methyltransferase TrmFO (436 aa).

11 to 16 (GAGLAG) contributes to the FAD binding site.

Belongs to the MnmG family. TrmFO subfamily. FAD is required as a cofactor.

The protein resides in the cytoplasm. It carries out the reaction uridine(54) in tRNA + (6R)-5,10-methylene-5,6,7,8-tetrahydrofolate + NADH + H(+) = 5-methyluridine(54) in tRNA + (6S)-5,6,7,8-tetrahydrofolate + NAD(+). It catalyses the reaction uridine(54) in tRNA + (6R)-5,10-methylene-5,6,7,8-tetrahydrofolate + NADPH + H(+) = 5-methyluridine(54) in tRNA + (6S)-5,6,7,8-tetrahydrofolate + NADP(+). Functionally, catalyzes the folate-dependent formation of 5-methyl-uridine at position 54 (M-5-U54) in all tRNAs. The polypeptide is Methylenetetrahydrofolate--tRNA-(uracil-5-)-methyltransferase TrmFO (Shouchella clausii (strain KSM-K16) (Alkalihalobacillus clausii)).